Reading from the N-terminus, the 522-residue chain is Transcription factor SPT20 homolog (522 aa).

S284 carries the post-translational modification Phosphoserine. Disordered regions lie at residues 361-380 (DEES…DHSN) and 408-522 (PVKM…RHES). Over residues 412–425 (SHSSSGSASLSQVS) the composition is skewed to low complexity. The segment covering 433-442 (TETVSVQSSV) has biased composition (polar residues). The span at 458–467 (SSSGNSSSGN) shows a compositional bias: low complexity. Positions 481–492 (PTPPPSSKPPTI) are enriched in pro residues. Position 482 is a phosphothreonine (T482). Residues 506-522 (LSPAALSPASSSQRHES) show a composition bias toward low complexity. Phosphoserine is present on residues S507 and S512.

It belongs to the SPT20 family. Interacts with ATG9A. Interacts with MAPK14.

In terms of biological role, required for MAP kinase p38 (MAPK11, MAPK12, MAPK13 and/or MAPK14) activation during gastrulation. Required for down-regulation of E-cadherin during gastrulation by regulating E-cadherin protein level downstream from NCK-interacting kinase (NIK) and independently of the regulation of transcription by FGF signaling and Snail. Required for starvation-induced ATG9A trafficking during autophagy. This is Transcription factor SPT20 homolog (SUPT20H) from Pongo abelii (Sumatran orangutan).